Consider the following 536-residue polypeptide: uncharacterized protein (536 aa).

The segment at 71 to 98 (LFVIVKSGCSCPSGRICRHMLAVFLYVY) adopts an SWIM-type zinc-finger fold. Positions 482-528 (YKEAARYLKKLRTLYKKAKKQKVWERYIQLLSSHYKRLRALQEELQK) form a coiled coil.

This is an uncharacterized protein from Bacillus subtilis (strain 168).